The primary structure comprises 198 residues: Uracil phosphoribosyltransferase homolog (198 aa).

Belongs to the UPRTase family.

It is found in the plastid. The protein localises to the chloroplast. This Porphyra purpurea (Red seaweed) protein is Uracil phosphoribosyltransferase homolog.